The primary structure comprises 286 residues: Formyltetrahydrofolate deformylase (286 aa).

The region spanning 8–88 (VLTLQCPEGI…MDWQLRERGQ (81 aa)) is the ACT domain. D230 is a catalytic residue.

Belongs to the PurU family.

The catalysed reaction is (6R)-10-formyltetrahydrofolate + H2O = (6S)-5,6,7,8-tetrahydrofolate + formate + H(+). It functions in the pathway purine metabolism; IMP biosynthesis via de novo pathway; formate from 10-formyl-5,6,7,8-tetrahydrofolate: step 1/1. Its function is as follows. Catalyzes the hydrolysis of 10-formyltetrahydrofolate (formyl-FH4) to formate and tetrahydrofolate (FH4). In Corynebacterium sp. (strain P-1), this protein is Formyltetrahydrofolate deformylase.